Reading from the N-terminus, the 272-residue chain is MKTVSQLIDMKQKQTKISMVTAYDFPSAKQVEAAGIDMILVGDSLGMTVLGYESTVQVTLADMIHHGRAVRRGAPNTFVVVDMPIGAVGISMTQDLNHALKLYQETSANAIKAEGAHITPFIEKATAIGIPVVAHLGLTPQSVGVMGYKLQGATKEAAEQLILDAKNVEQAGAVALVLEAIPNDLAEEISKHLTIPVIGIGAGKGTDGQVLVYHDMLNYGVEHKAKFVKQFADFSVGVDGLKQYDQEVKSGAFPSEEYTYKKKIMNEVNNND.

Mg(2+)-binding residues include D43 and D82. 3-methyl-2-oxobutanoate is bound by residues 43 to 44, D82, and K112; that span reads DS. Residue E114 coordinates Mg(2+). E179 serves as the catalytic Proton acceptor.

This sequence belongs to the PanB family. As to quaternary structure, homodecamer; pentamer of dimers. Mg(2+) serves as cofactor.

It localises to the cytoplasm. The catalysed reaction is 3-methyl-2-oxobutanoate + (6R)-5,10-methylene-5,6,7,8-tetrahydrofolate + H2O = 2-dehydropantoate + (6S)-5,6,7,8-tetrahydrofolate. Its pathway is cofactor biosynthesis; (R)-pantothenate biosynthesis; (R)-pantoate from 3-methyl-2-oxobutanoate: step 1/2. Functionally, catalyzes the reversible reaction in which hydroxymethyl group from 5,10-methylenetetrahydrofolate is transferred onto alpha-ketoisovalerate to form ketopantoate. The chain is 3-methyl-2-oxobutanoate hydroxymethyltransferase from Staphylococcus aureus (strain bovine RF122 / ET3-1).